Here is a 267-residue protein sequence, read N- to C-terminus: Tryptophan synthase alpha chain (267 aa).

Catalysis depends on proton acceptor residues glutamate 39 and aspartate 50.

The protein belongs to the TrpA family. As to quaternary structure, tetramer of two alpha and two beta chains.

The catalysed reaction is (1S,2R)-1-C-(indol-3-yl)glycerol 3-phosphate + L-serine = D-glyceraldehyde 3-phosphate + L-tryptophan + H2O. The protein operates within amino-acid biosynthesis; L-tryptophan biosynthesis; L-tryptophan from chorismate: step 5/5. Functionally, the alpha subunit is responsible for the aldol cleavage of indoleglycerol phosphate to indole and glyceraldehyde 3-phosphate. In Helicobacter hepaticus (strain ATCC 51449 / 3B1), this protein is Tryptophan synthase alpha chain.